We begin with the raw amino-acid sequence, 286 residues long: B3 domain-containing protein REM11 (286 aa).

The TF-B3 1 DNA-binding region spans 1–70 (MAWNLAIITL…TPMLSLVSTQ (70 aa)). Positions 68–114 (STQSTSHKSQKRECSKHSEKESISAVPSKGKKNRKARSNREERRDSS) are disordered. Residues 78-89 (KRECSKHSEKES) show a composition bias toward basic and acidic residues. Residues 119-219 (NRFVTFTPED…RAQVCFYGVF (101 aa)) constitute a DNA-binding region (TF-B3 2).

The protein resides in the nucleus. This chain is B3 domain-containing protein REM11 (REM11), found in Arabidopsis thaliana (Mouse-ear cress).